We begin with the raw amino-acid sequence, 1439 residues long: Probable histone acetyltransferase HAC-like 2 (1439 aa).

2 disordered regions span residues M1 to D43 and Y313 to P335. The segment covering V325–P335 has biased composition (polar residues). The TAZ-type zinc-finger motif lies at E607 to A687. Residues K827–E933 form a PHD-type; degenerate zinc finger. A CBP/p300-type HAT domain is found at V948–G1383. Positions E964 to V989 form a coiled coil. Acetyl-CoA-binding positions include L1071 to S1073, R1090 to T1091, and W1146. Residues H1265–V1328 form a ZZ-type zinc finger. Positions 1270, 1273, 1285, 1288, 1294, 1297, 1310, and 1318 each coordinate Zn(2+).

The protein resides in the nucleus. It catalyses the reaction L-lysyl-[protein] + acetyl-CoA = N(6)-acetyl-L-lysyl-[protein] + CoA + H(+). Functionally, acetyltransferase enzyme. Acetylates histones, giving a specific tag for transcriptional activation. In Oryza sativa subsp. japonica (Rice), this protein is Probable histone acetyltransferase HAC-like 2.